The chain runs to 522 residues: GMP synthase [glutamine-hydrolyzing] (522 aa).

The Glutamine amidotransferase type-1 domain occupies Lys9–Leu204. The active-site Nucleophile is Cys86. Active-site residues include His178 and Glu180. The GMPS ATP-PPase domain maps to Trp205 to Arg397. Ser232 to Ser238 lines the ATP pocket.

Homodimer.

The enzyme catalyses XMP + L-glutamine + ATP + H2O = GMP + L-glutamate + AMP + diphosphate + 2 H(+). The protein operates within purine metabolism; GMP biosynthesis; GMP from XMP (L-Gln route): step 1/1. In terms of biological role, catalyzes the synthesis of GMP from XMP. This Xylella fastidiosa (strain M12) protein is GMP synthase [glutamine-hydrolyzing].